Reading from the N-terminus, the 204-residue chain is Phosphopantothenoylcysteine decarboxylase (204 aa).

Residues Thr-53 and Asp-104–Thr-107 contribute to the FMN site. Residue Asn-140 participates in substrate binding. Residue Cys-173 is the Proton donor of the active site.

The protein belongs to the HFCD (homooligomeric flavin containing Cys decarboxylase) superfamily. As to quaternary structure, homotrimer. The cofactor is FMN.

The catalysed reaction is N-[(R)-4-phosphopantothenoyl]-L-cysteine + H(+) = (R)-4'-phosphopantetheine + CO2. Its pathway is cofactor biosynthesis; coenzyme A biosynthesis; CoA from (R)-pantothenate: step 3/5. In terms of biological role, catalyzes the decarboxylation of the cysteine moiety of 4-phosphopantothenoylcysteine to form 4'-phosphopantotheine and this reaction forms part of the biosynthesis of coenzyme A. The polypeptide is Phosphopantothenoylcysteine decarboxylase (Ppcdc) (Mus musculus (Mouse)).